Consider the following 448-residue polypeptide: Cytoplasmic tRNA 2-thiolation protein 2 (448 aa).

Belongs to the CTU2/NCS2 family.

It is found in the cytoplasm. Its pathway is tRNA modification; 5-methoxycarbonylmethyl-2-thiouridine-tRNA biosynthesis. Plays a central role in 2-thiolation of mcm(5)S(2)U at tRNA wobble positions of tRNA(Lys), tRNA(Glu) and tRNA(Gln). May act by forming a heterodimer with NCS6 that ligates sulfur from thiocarboxylated URM1 onto the uridine of tRNAs at wobble position. Prior mcm(5) tRNA modification by the elongator complex is required for 2-thiolation. May also be involved in protein urmylation. The polypeptide is Cytoplasmic tRNA 2-thiolation protein 2 (Scheffersomyces stipitis (strain ATCC 58785 / CBS 6054 / NBRC 10063 / NRRL Y-11545) (Yeast)).